Consider the following 84-residue polypeptide: Hepcidin (84 aa).

Residues 1-24 (MALSSQIWAACLLLLLLLASLTSG) form the signal peptide. The propeptide occupies 25-54 (SVFPQQTGQLAELQPQDRAGARASWMPMFQ). 4 disulfide bridges follow: Cys-66/Cys-82, Cys-69/Cys-72, Cys-70/Cys-78, and Cys-73/Cys-81.

Belongs to the hepcidin family. Interacts with SLC40A1; this interaction promotes SLC40A1 rapid ubiquitination. In terms of tissue distribution, highest expression in liver and to a lesser extent in heart and brain. Low levels in lung, tonsils, salivary gland, trachea, prostate gland, adrenal gland and thyroid gland. Secreted into the urine and blood. Expressed by hepatocytes.

It localises to the secreted. Its function is as follows. Liver-produced hormone that constitutes the main circulating regulator of iron absorption and distribution across tissues. Acts by promoting endocytosis and degradation of ferroportin/SLC40A1, leading to the retention of iron in iron-exporting cells and decreased flow of iron into plasma. Controls the major flows of iron into plasma: absorption of dietary iron in the intestine, recycling of iron by macrophages, which phagocytose old erythrocytes and other cells, and mobilization of stored iron from hepatocytes. Functionally, has strong antimicrobial activity against E.coli ML35P N.cinerea and weaker against S.epidermidis, S.aureus and group b streptococcus bacteria. Active against the fungus C.albicans. No activity against P.aeruginosa. The sequence is that of Hepcidin from Homo sapiens (Human).